The sequence spans 810 residues: DNA-binding protein REB1 (810 aa).

2 stretches are compositionally biased toward basic and acidic residues: residues 1–10 (MPSGHNDKNA) and 29–44 (HQNH…LENK). Disordered regions lie at residues 1–80 (MPSG…ENIS), 114–161 (NQQD…GVDD), 180–243 (NNNN…TNND), 294–313 (HGLN…LSNS), and 346–365 (QDTQ…AGSV). Low complexity-rich tracts occupy residues 51-64 (IVES…NNND) and 124-135 (NNNTDNGNDSNN). Residues 149–161 (DKNKKDAGVGVDD) are compositionally biased toward basic and acidic residues. Low complexity predominate over residues 180–191 (NNNNNNSIANDS). Over residues 198–208 (HDNGNNHENSQ) the composition is skewed to basic and acidic residues. A compositionally biased stretch (polar residues) spans 346–355 (QDTQPHQQKS). S355 bears the Phosphoserine mark. The HTH myb-type domain maps to 470–523 (HIFEQRGKWTAEEEQELAKLCAEKEGQWAEIGKTLGRMPEDCRDRWRNYVKCGT). Positions 497–519 (WAEIGKTLGRMPEDCRDRWRNYV) form a DNA-binding region, H-T-H motif. The disordered stretch occupies residues 572-667 (QNDHRNNDED…STHSKSLSNT (96 aa)). Residues 586 to 606 (ASAAAAAAAAIQEQQQLLQQK) show a composition bias toward low complexity. A compositionally biased stretch (basic and acidic residues) spans 627–636 (DNKDEDKPHD). Polar residues predominate over residues 643–667 (DDNSQNSMVPAPSATSTHSKSLSNT). One can recognise a Myb-like domain in the interval 692 to 717 (NWTIVSERMGGTRSRIQCRYKWNKLV). Residue K807 forms a Glycyl lysine isopeptide (Lys-Gly) (interchain with G-Cter in SUMO) linkage.

Its subcellular location is the nucleus. Its function is as follows. DNA-binding protein that recognizes sites within both the enhancer and the promoter of rRNA transcription, as well as upstream of many genes transcribed by RNA polymerase II. It is essential for cell growth. May stimulate or inhibit transcription. Specifically recognizes the sequence 5'-CCGGGTA-3' or 5'-CGGGTRR-3' (where R is any purine). A member of the general regulatory factors (GRFs) which act as genome partitioners. Acts as a chromatin insulator which are known as STARs (Subtelomeric anti-silencing region). STARs prevent negative or positive transcription influence by extending across chromatin to a promoter. This chain is DNA-binding protein REB1 (REB1), found in Saccharomyces cerevisiae (strain ATCC 204508 / S288c) (Baker's yeast).